Reading from the N-terminus, the 450-residue chain is 23S rRNA (uracil(1939)-C(5))-methyltransferase RlmD (450 aa).

The tract at residues 1 to 22 is disordered; the sequence is MAKHDRGLRFQPAGGSRAPQIP. Residues 20–78 form the TRAM domain; it reads QIPVGKKQRLTIQRLANDGRGIAFVEGRTWFVSGALAGEEVEARVLGSHGKVVEARAER. The [4Fe-4S] cluster site is built by Cys91, Cys97, Cys100, and Cys179. 6 residues coordinate S-adenosyl-L-methionine: Gln283, Phe312, Asn317, Glu333, Asp360, and Asp381. The active-site Nucleophile is the Cys407.

The protein belongs to the class I-like SAM-binding methyltransferase superfamily. RNA M5U methyltransferase family. RlmD subfamily.

It catalyses the reaction uridine(1939) in 23S rRNA + S-adenosyl-L-methionine = 5-methyluridine(1939) in 23S rRNA + S-adenosyl-L-homocysteine + H(+). Its function is as follows. Catalyzes the formation of 5-methyl-uridine at position 1939 (m5U1939) in 23S rRNA. The chain is 23S rRNA (uracil(1939)-C(5))-methyltransferase RlmD from Pseudomonas fluorescens (strain ATCC BAA-477 / NRRL B-23932 / Pf-5).